The sequence spans 521 residues: Protein nucleotidyltransferase YdiU (521 aa).

Gly-109, Gly-111, Arg-112, Lys-131, Asp-143, Gly-144, Arg-194, and Arg-201 together coordinate ATP. Asp-270 serves as the catalytic Proton acceptor. Residues Asn-271 and Asp-280 each contribute to the Mg(2+) site. Asp-280 is a binding site for ATP.

Belongs to the SELO family. Requires Mg(2+) as cofactor. Mn(2+) is required as a cofactor.

The catalysed reaction is L-seryl-[protein] + ATP = 3-O-(5'-adenylyl)-L-seryl-[protein] + diphosphate. It carries out the reaction L-threonyl-[protein] + ATP = 3-O-(5'-adenylyl)-L-threonyl-[protein] + diphosphate. The enzyme catalyses L-tyrosyl-[protein] + ATP = O-(5'-adenylyl)-L-tyrosyl-[protein] + diphosphate. It catalyses the reaction L-histidyl-[protein] + UTP = N(tele)-(5'-uridylyl)-L-histidyl-[protein] + diphosphate. The catalysed reaction is L-seryl-[protein] + UTP = O-(5'-uridylyl)-L-seryl-[protein] + diphosphate. It carries out the reaction L-tyrosyl-[protein] + UTP = O-(5'-uridylyl)-L-tyrosyl-[protein] + diphosphate. Functionally, nucleotidyltransferase involved in the post-translational modification of proteins. It can catalyze the addition of adenosine monophosphate (AMP) or uridine monophosphate (UMP) to a protein, resulting in modifications known as AMPylation and UMPylation. This Burkholderia thailandensis (strain ATCC 700388 / DSM 13276 / CCUG 48851 / CIP 106301 / E264) protein is Protein nucleotidyltransferase YdiU.